The chain runs to 107 residues: Integration host factor subunit beta (107 aa).

The tract at residues 76–107 is disordered; it reads FVPHFKPGKELRERVDGRAGEPLKADDPDDDR. The segment covering 82–101 has biased composition (basic and acidic residues); that stretch reads PGKELRERVDGRAGEPLKAD.

The protein belongs to the bacterial histone-like protein family. As to quaternary structure, heterodimer of an alpha and a beta chain.

Its function is as follows. This protein is one of the two subunits of integration host factor, a specific DNA-binding protein that functions in genetic recombination as well as in transcriptional and translational control. The polypeptide is Integration host factor subunit beta (Burkholderia cenocepacia (strain HI2424)).